A 392-amino-acid polypeptide reads, in one-letter code: ABSCISIC ACID-INSENSITIVE 5-like protein 4 (392 aa).

A disordered region spans residues Met-1 to Pro-22. 3 positions are modified to phosphoserine: Ser-28, Ser-50, and Ser-96. Thr-135 bears the Phosphothreonine mark. The segment at Asn-266–Phe-297 is disordered. Positions Val-274–Ser-291 are enriched in polar residues. Residues Val-311–Gln-374 enclose the bZIP domain. The interval Arg-313–Lys-332 is basic motif. The segment at Leu-339 to Ile-360 is leucine-zipper.

It belongs to the bZIP family. ABI5 subfamily. DNA-binding heterodimer. Interacts with ABI3 and the AFP proteins AFP1, AFP2, AFP3 and AFP4. Phosphorylated by CPK4, CPK11, SRK2D and SRK2I in vitro.

The protein resides in the nucleus. Binds to the ABA-responsive element (ABRE). Could participate in abscisic acid-regulated gene expression. This chain is ABSCISIC ACID-INSENSITIVE 5-like protein 4 (ABF1), found in Arabidopsis thaliana (Mouse-ear cress).